The following is a 178-amino-acid chain: Interleukin-10 (178 aa).

A signal peptide spans 1–18 (MHSSALLCFLVFLAGVGA). Asn-29 carries an N-linked (GlcNAc...) asparagine glycan. Intrachain disulfides connect Cys-30/Cys-126 and Cys-80/Cys-132. A glycan (N-linked (GlcNAc...) asparagine) is linked at Asn-134.

This sequence belongs to the IL-10 family. Homodimer. Interacts with IL10RA and IL10RB.

The protein resides in the secreted. Major immune regulatory cytokine that acts on many cells of the immune system where it has profound anti-inflammatory functions, limiting excessive tissue disruption caused by inflammation. Mechanistically, IL10 binds to its heterotetrameric receptor comprising IL10RA and IL10RB leading to JAK1 and STAT2-mediated phosphorylation of STAT3. In turn, STAT3 translocates to the nucleus where it drives expression of anti-inflammatory mediators. Targets antigen-presenting cells (APCs) such as macrophages and monocytes and inhibits their release of pro-inflammatory cytokines including granulocyte-macrophage colony-stimulating factor /GM-CSF, granulocyte colony-stimulating factor/G-CSF, IL-1 alpha, IL-1 beta, IL-6, IL-8 and TNF-alpha. Also interferes with antigen presentation by reducing the expression of MHC-class II and co-stimulatory molecules, thereby inhibiting their ability to induce T cell activation. In addition, controls the inflammatory response of macrophages by reprogramming essential metabolic pathways including mTOR signaling. The polypeptide is Interleukin-10 (IL10) (Felis catus (Cat)).